The sequence spans 364 residues: DNA replication and repair protein RecF (364 aa).

30–37 (GNNGMGKT) serves as a coordination point for ATP.

It belongs to the RecF family.

It localises to the cytoplasm. Functionally, the RecF protein is involved in DNA metabolism; it is required for DNA replication and normal SOS inducibility. RecF binds preferentially to single-stranded, linear DNA. It also seems to bind ATP. In Porphyromonas gingivalis (strain ATCC 33277 / DSM 20709 / CIP 103683 / JCM 12257 / NCTC 11834 / 2561), this protein is DNA replication and repair protein RecF.